Consider the following 416-residue polypeptide: UPF0761 membrane protein Mpe_A1422 (416 aa).

The next 6 helical transmembrane spans lie at 63 to 83 (IALV…PMFG), 120 to 140 (LGTV…LTID), 159 to 179 (VLVY…SLTL), 198 to 218 (LSVL…AGLF), 234 to 256 (GGLF…LAQV), and 271 to 291 (IFLI…VIAA).

The protein belongs to the UPF0761 family.

Its subcellular location is the cell inner membrane. The polypeptide is UPF0761 membrane protein Mpe_A1422 (Methylibium petroleiphilum (strain ATCC BAA-1232 / LMG 22953 / PM1)).